Here is an 82-residue protein sequence, read N- to C-terminus: MAHSVKIYDTCIGCTQCVRACPTDVLEMVPWKGNNKAGMIAAAPRTEDCVGCKRCETACPTDFLSIRVYLGPETTRSMGLAY.

4Fe-4S ferredoxin-type domains follow at residues 2-31 (AHSV…MVPW) and 40-69 (IAAA…IRVY). Residues Cys11, Cys14, Cys17, Cys21, Cys49, Cys52, Cys55, and Cys59 each coordinate [4Fe-4S] cluster.

In terms of assembly, the cyanobacterial PSI reaction center is composed of one copy each of PsaA,B,C,D,E,F,I,J,K,L,M and X, and forms trimeric complexes. Requires [4Fe-4S] cluster as cofactor.

It localises to the cellular thylakoid membrane. The catalysed reaction is reduced [plastocyanin] + hnu + oxidized [2Fe-2S]-[ferredoxin] = oxidized [plastocyanin] + reduced [2Fe-2S]-[ferredoxin]. Functionally, apoprotein for the two 4Fe-4S centers FA and FB of photosystem I (PSI); essential for photochemical activity. FB is the terminal electron acceptor of PSI, donating electrons to ferredoxin. The C-terminus interacts with PsaA/B/D and helps assemble the protein into the PSI complex. Required for binding of PsaD and PsaE to PSI. PSI is a plastocyanin/cytochrome c6-ferredoxin oxidoreductase, converting photonic excitation into a charge separation, which transfers an electron from the donor P700 chlorophyll pair to the spectroscopically characterized acceptors A0, A1, FX, FA and FB in turn. The polypeptide is Photosystem I iron-sulfur center (Synechococcus sp. (strain JA-2-3B'a(2-13)) (Cyanobacteria bacterium Yellowstone B-Prime)).